A 244-amino-acid polypeptide reads, in one-letter code: 1-(5-phosphoribosyl)-5-[(5-phosphoribosylamino)methylideneamino] imidazole-4-carboxamide isomerase (244 aa).

Asp9 functions as the Proton acceptor in the catalytic mechanism. The active-site Proton donor is the Asp131.

This sequence belongs to the HisA/HisF family.

Its subcellular location is the cytoplasm. The enzyme catalyses 1-(5-phospho-beta-D-ribosyl)-5-[(5-phospho-beta-D-ribosylamino)methylideneamino]imidazole-4-carboxamide = 5-[(5-phospho-1-deoxy-D-ribulos-1-ylimino)methylamino]-1-(5-phospho-beta-D-ribosyl)imidazole-4-carboxamide. Its pathway is amino-acid biosynthesis; L-histidine biosynthesis; L-histidine from 5-phospho-alpha-D-ribose 1-diphosphate: step 4/9. The sequence is that of 1-(5-phosphoribosyl)-5-[(5-phosphoribosylamino)methylideneamino] imidazole-4-carboxamide isomerase from Campylobacter jejuni subsp. jejuni serotype O:6 (strain 81116 / NCTC 11828).